Here is a 427-residue protein sequence, read N- to C-terminus: Histidine--tRNA ligase (427 aa).

It belongs to the class-II aminoacyl-tRNA synthetase family. Homodimer.

Its subcellular location is the cytoplasm. The enzyme catalyses tRNA(His) + L-histidine + ATP = L-histidyl-tRNA(His) + AMP + diphosphate + H(+). This chain is Histidine--tRNA ligase, found in Alteromonas mediterranea (strain DSM 17117 / CIP 110805 / LMG 28347 / Deep ecotype).